Consider the following 919-residue polypeptide: Glutamate receptor ionotropic, kainate 3 (919 aa).

The first 31 residues, 1-31 (MTAPWRRLRSLVWEYWAGFLVCAFWIPDSRG), serve as a signal peptide directing secretion. The Extracellular portion of the chain corresponds to 32–563 (MPHVIRIGGI…VFSFLNPLSP (532 aa)). N-linked (GlcNAc...) asparagine glycans are attached at residues Asn70, Asn76, Asn278, Asn381, Asn415, Asn426, and Asn433. Cys99 and Cys350 form a disulfide bridge. The L-glutamate site is built by Pro518, Thr520, and Arg525. N-linked (GlcNAc...) asparagine glycosylation is found at Asn548 and Asn551. Residues 564 to 584 (DIWMYVLLAYLGVSCVLFVIA) form a helical membrane-spanning segment. The Cytoplasmic portion of the chain corresponds to 585–636 (RFSPYEWYDAHPCNPGSEVVENNFTLLNSFWFGMGSLMQQGSELMPKALSTR). Residues 637 to 657 (IIGGIWWFFTLIIISSYTANL) form a helical membrane-spanning segment. Residues 658-820 (AAFLTVERME…KEASALGIQK (163 aa)) are Extracellular-facing. L-glutamate contacts are provided by Ala691, Thr692, and Glu739. A glycan (N-linked (GlcNAc...) asparagine) is linked at Asn752. Residues 821–841 (IGGIFIVLAAGLVLSVLVAVG) traverse the membrane as a helical segment. Residues 842–919 (EFIYKLRKTA…CSTSLAPVFP (78 aa)) are Cytoplasmic-facing. The residue at position 869 (Ser869) is a Phosphoserine. Residue Lys887 forms a Glycyl lysine isopeptide (Lys-Gly) (interchain with G-Cter in SUMO1) linkage.

It belongs to the glutamate-gated ion channel (TC 1.A.10.1) family. GRIK3 subfamily. Homotetramer, and heterotetramer with either GRIK4 or GRIK5. Can form functional heteromeric receptors with GRIK2. Interacts with PRKCABP. Interacts with NETO2. As to expression, detected in whole brain, cerebellum, brain cortex and hippocampus.

The protein localises to the cell membrane. Its subcellular location is the postsynaptic cell membrane. It catalyses the reaction Ca(2+)(in) = Ca(2+)(out). Glutamate-gated receptor activity inhibited by spermine. Functionally, ionotropic glutamate receptor that functions as a cation-permeable ligand-gated ion channel, gated by L-glutamate and the glutamatergic agonist kainic acid. Binding of the excitatory neurotransmitter L-glutamate induces a conformation change, leading to the opening of the cation channel, and thereby converts the chemical signal to an electrical impulse. The receptor then desensitizes rapidly and enters a transient inactive state, characterized by the presence of bound agonist. In association with GRIK2, involved in presynaptic facilitation of glutamate release at hippocampal mossy fiber synapses. This Mus musculus (Mouse) protein is Glutamate receptor ionotropic, kainate 3 (Grik3).